We begin with the raw amino-acid sequence, 379 residues long: cAMP-dependent protein kinase type I-alpha regulatory subunit (379 aa).

M1 is subject to N-acetylmethionine. Residues 1 to 134 (MASSSTSSEE…ALAKAIEKNV (134 aa)) are dimerization and phosphorylation. Residues 63-93 (QMVSQQKSSSRSDSREDEVSPPMNPVVKGRR) are disordered. Positions 94 to 98 (RRGAI) match the Pseudophosphorylation motif motif. Residues 135–252 (LFAH…SKVS), E200, R209, 253–379 (ILES…SLSV), E324, and R333 contribute to the 3',5'-cyclic AMP site.

It belongs to the cAMP-dependent kinase regulatory chain family. As to quaternary structure, the inactive holoenzyme is composed of two regulatory chains and two catalytic chains. Activation by cAMP releases the two active catalytic monomers and the regulatory dimer. Interacts with PRKACA and PRKACB. Interacts with PRRC1; resulting in PKA activation. The pseudophosphorylation site binds to the substrate-binding region of the catalytic chain, resulting in the inhibition of its activity.

Its subcellular location is the cell membrane. In terms of biological role, regulatory subunit of the cAMP-dependent protein kinases involved in cAMP signaling in cells. The chain is cAMP-dependent protein kinase type I-alpha regulatory subunit (prkar1aa) from Danio rerio (Zebrafish).